The sequence spans 820 residues: Trimethylamine-N-oxide reductase (820 aa).

Residues 1–33 constitute a signal peptide (tat-type signal); the sequence is MAITRRSFLKGVATTSAASVIGPSLLASASANA. Serine 179 provides a ligand contact to Mo-bis(molybdopterin guanine dinucleotide).

Belongs to the prokaryotic molybdopterin-containing oxidoreductase family. Mo-bis(molybdopterin guanine dinucleotide) serves as cofactor. Predicted to be exported by the Tat system. The position of the signal peptide cleavage has not been experimentally proven.

It is found in the periplasm. The catalysed reaction is trimethylamine + 2 Fe(III)-[cytochrome c] + H2O = trimethylamine N-oxide + 2 Fe(II)-[cytochrome c] + 3 H(+). Reduces trimethylamine-N-oxide (TMAO) into trimethylamine; an anaerobic reaction coupled to energy-yielding reactions. The sequence is that of Trimethylamine-N-oxide reductase (torA) from Vibrio vulnificus (strain YJ016).